Consider the following 579-residue polypeptide: Nuclear hormone receptor family member nhr-22 (579 aa).

A DNA-binding region (nuclear receptor) is located at residues 93–173 (SRSCHVCSSP…AGMRRELVQA (81 aa)). 2 NR C4-type zinc fingers span residues 96 to 117 (CHVC…CKAC) and 133 to 161 (CIGT…FIKC). Over residues 233–242 (LSPDPSSSQP) the composition is skewed to low complexity. The segment at 233–256 (LSPDPSSSQPLDMTVTPPPLHRST) is disordered. An NR LBD domain is found at 304-577 (EVENKIFELV…SIMYDLLSFR (274 aa)).

Belongs to the nuclear hormone receptor family.

It localises to the nucleus. Functionally, orphan nuclear receptor. The chain is Nuclear hormone receptor family member nhr-22 (nhr-22) from Caenorhabditis elegans.